Reading from the N-terminus, the 187-residue chain is Peptidoglycan-recognition protein 3 (187 aa).

The first 19 residues, 1–19 (MKAFLVALLISIELALVFA), serve as a signal peptide directing secretion. Cystine bridges form between Cys21-Cys144 and Cys58-Cys64. The 128-residue stretch at 43–170 (KPLKYVIINH…RTIRQTNSPG (128 aa)) folds into the N-acetylmuramoyl-L-alanine amidase domain. N-linked (GlcNAc...) asparagine glycosylation is present at Asn51.

It belongs to the N-acetylmuramoyl-L-alanine amidase 2 family.

The protein resides in the secreted. Peptidoglycan-recognition protein probably involved in innate immunity by binding to peptidoglycans (PGN) of bacteria and activating the prophenoloxidase (proPO) cascade immune response. Binds to 1,3-beta-D-glucan and PGN. The polypeptide is Peptidoglycan-recognition protein 3 (PGRP-3) (Holotrichia diomphalia (Korean black chafer)).